A 550-amino-acid chain; its full sequence is Urocanate hydratase (550 aa).

NAD(+)-binding positions include 48–49 (GG), Q126, 172–174 (GMG), E192, R197, 238–239 (NA), 259–263 (QTSAH), 268–269 (YL), and Y317. The active site involves C405. G487 contributes to the NAD(+) binding site.

Belongs to the urocanase family. Requires NAD(+) as cofactor.

Its subcellular location is the cytoplasm. The catalysed reaction is 4-imidazolone-5-propanoate = trans-urocanate + H2O. Its pathway is amino-acid degradation; L-histidine degradation into L-glutamate; N-formimidoyl-L-glutamate from L-histidine: step 2/3. In terms of biological role, catalyzes the conversion of urocanate to 4-imidazolone-5-propionate. In Saccharopolyspora erythraea (strain ATCC 11635 / DSM 40517 / JCM 4748 / NBRC 13426 / NCIMB 8594 / NRRL 2338), this protein is Urocanate hydratase.